Here is a 491-residue protein sequence, read N- to C-terminus: Glutamyl-tRNA(Gln) amidotransferase subunit A (491 aa).

Residues lysine 76 and serine 154 each act as charge relay system in the active site. Residue serine 178 is the Acyl-ester intermediate of the active site.

It belongs to the amidase family. GatA subfamily. In terms of assembly, heterotrimer of A, B and C subunits.

It carries out the reaction L-glutamyl-tRNA(Gln) + L-glutamine + ATP + H2O = L-glutaminyl-tRNA(Gln) + L-glutamate + ADP + phosphate + H(+). Allows the formation of correctly charged Gln-tRNA(Gln) through the transamidation of misacylated Glu-tRNA(Gln) in organisms which lack glutaminyl-tRNA synthetase. The reaction takes place in the presence of glutamine and ATP through an activated gamma-phospho-Glu-tRNA(Gln). This is Glutamyl-tRNA(Gln) amidotransferase subunit A from Cereibacter sphaeroides (strain ATCC 17023 / DSM 158 / JCM 6121 / CCUG 31486 / LMG 2827 / NBRC 12203 / NCIMB 8253 / ATH 2.4.1.) (Rhodobacter sphaeroides).